The sequence spans 293 residues: Proline iminopeptidase (293 aa).

An AB hydrolase-1 domain is found at 28 to 277; that stretch reads PLVLLHGGPG…NCGHMSFVEK (250 aa). The active-site Nucleophile is Ser105. Asp244 is a catalytic residue. Catalysis depends on His271, which acts as the Proton donor.

Belongs to the peptidase S33 family.

Its subcellular location is the cell envelope. The catalysed reaction is Release of N-terminal proline from a peptide.. In terms of biological role, releases the N-terminal proline from various substrates. This chain is Proline iminopeptidase, found in Lactobacillus crispatus (strain ST1).